The chain runs to 337 residues: UPF0252 protein PH1321 (337 aa).

The chain crosses the membrane as a helical span at residues 100-120 (IIGMLFLVFIILPAITSNLWS).

The protein belongs to the UPF0252 family.

The protein localises to the membrane. This is UPF0252 protein PH1321 from Pyrococcus horikoshii (strain ATCC 700860 / DSM 12428 / JCM 9974 / NBRC 100139 / OT-3).